A 295-amino-acid chain; its full sequence is MAECCVPVCQRPICIPPPYADLGKAARDIFNKGFGFGLVKLDVKTKSCSGVEFSTSGSSNTDTGKVSGTLETKYKWCEYGLTFTEKWNTDNTLGTEIAIEDQICQGLKLTFDTTFSPNTGKKSGKIKSAYKRECINLGCDVDFDFAGPAIHGSAVFGYEGWLAGYQMTFDSAKSKLTRSNFAVGYRTGDFQLHTNVNNGTEFGGSIYQKVCEDFDTSVNLAWTSGTNCTRFGIAAKYQLDPTASISAKVNNSSLIGVGYTQTLRPGVKLTLSALVDGKSFNAGGHKLGLALELEA.

ATP-binding residues include lysine 24 and lysine 32. Lysine 32 is subject to N6-acetyllysine; alternate. Position 32 is an N6-succinyllysine; alternate (lysine 32). Residue lysine 32 forms a Glycyl lysine isopeptide (Lys-Gly) (interchain with G-Cter in ubiquitin); alternate linkage. The next 2 membrane-spanning stretches (beta stranded) occupy residues 38-47 (LVKLDVKTKS) and 51-59 (VEFSTSGSS). Lysine 65 is covalently cross-linked (Glycyl lysine isopeptide (Lys-Gly) (interchain with G-Cter in ubiquitin)). The beta stranded transmembrane segment at 66–76 (VSGTLETKYKW) threads the bilayer. Tyrosine 79 carries the phosphotyrosine modification. A run of 3 beta stranded transmembrane segments spans residues 81 to 88 (LTFTEKWN), 92 to 101 (TLGTEIAIED), and 107 to 116 (LKLTFDTTFS). A Phosphothreonine modification is found at threonine 119. Lysine 121 carries the post-translational modification N6-acetyllysine; alternate. Lysine 121 participates in a covalent cross-link: Glycyl lysine isopeptide (Lys-Gly) (interchain with G-Cter in ubiquitin); alternate. Residue lysine 122 forms a Glycyl lysine isopeptide (Lys-Gly) (interchain with G-Cter in ubiquitin) linkage. A run of 4 beta stranded transmembrane segments spans residues 123 to 132 (SGKIKSAYKR), 135 to 142 (INLGCDVD), 149 to 157 (AIHGSAVFG), and 162 to 170 (LAGYQMTFD). Lysine 173 is covalently cross-linked (Glycyl lysine isopeptide (Lys-Gly) (interchain with G-Cter in ubiquitin)). 6 beta stranded membrane passes run 175-187 (KLTR…GYRT), 190-197 (FQLHTNVN), 201-210 (EFGGSIYQKV), 214-223 (FDTSVNLAWT), 230-239 (RFGIAAKYQL), and 243-250 (ASISAKVN). The residue at position 237 (tyrosine 237) is a Phosphotyrosine. Position 252 is a phosphoserine (serine 252). NAD(+) contacts are provided by residues 254–256 (LIG) and 272–276 (SALVD). A run of 2 beta stranded transmembrane segments spans residues 254-263 (LIGVGYTQTL) and 266-275 (GVKLTLSALV). Lysine 278 is subject to N6-acetyllysine; alternate. Lysine 278 is covalently cross-linked (Glycyl lysine isopeptide (Lys-Gly) (interchain with G-Cter in ubiquitin); alternate). The beta stranded transmembrane segment at 285-294 (HKLGLALELE) threads the bilayer.

It belongs to the eukaryotic mitochondrial porin family. As to quaternary structure, monomer, homodimer and higher order oligomers; formation of higher order structures is necessary for scramblase activity. Interacts with ARMC12 in a TBC1D21-dependent manner. Interacts with KLC3. Interacts with SPATA33. Interacts with PPP3CC in a SPATA33-dependent manner. Post-translationally, ubiquitinated by PRKN during mitophagy, leading to its degradation and enhancement of mitophagy. Deubiquitinated by USP30. In terms of tissue distribution, highly expressed in heart, kidney, brain and ascitic tumor with very low levels in liver. Expressed in the head region of epididymal sperm.

It is found in the mitochondrion outer membrane. The protein resides in the membrane. The catalysed reaction is chloride(in) = chloride(out). It catalyses the reaction K(+)(in) = K(+)(out). The enzyme catalyses a 1,2-diacyl-sn-glycero-3-phospho-L-serine(in) = a 1,2-diacyl-sn-glycero-3-phospho-L-serine(out). It carries out the reaction a 1,2-diacyl-sn-glycero-3-phosphocholine(in) = a 1,2-diacyl-sn-glycero-3-phosphocholine(out). The catalysed reaction is a 1,2-diacyl-sn-glycero-3-phospho-(1D-myo-inositol)(in) = a 1,2-diacyl-sn-glycero-3-phospho-(1D-myo-inositol)(out). Non-selective voltage-gated ion channel that mediates the transport of anions and cations through the mitochondrion outer membrane and plasma membrane. The channel adopts an open conformation at zero mV and a closed conformation at both positive and negative potentials. There are two populations of channels; the main that functions in a lower open-state conductance with lower ion selectivity, that switch, in a voltage-dependent manner, from the open to a low-conducting 'closed' state and the other that has a normal ion selectivity in the typical high conductance, 'open' state. Binds various lipids, including the sphingolipid ceramide, the phospholipid phosphatidylcholine, and the sterols cholesterol and oxysterol. Binding of ceramide promotes the mitochondrial outer membrane permeabilization (MOMP) apoptotic pathway. Its function is as follows. Catalyzes the scrambling of phospholipids across the outer mitochondrial membrane; the mechanism is unrelated to channel activity and is capable of translocating both anionic and zwitterionic phospholipids. In Rattus norvegicus (Rat), this protein is Non-selective voltage-gated ion channel VDAC2.